Consider the following 669-residue polypeptide: DNA polymerase epsilon subunit B (669 aa).

The disordered stretch occupies residues 96–115; sequence QISTRNGSADNLAKKAERSD.

It belongs to the DNA polymerase epsilon subunit B family. In terms of assembly, heterotetramer. Consists of four subunits: POL2, DPB2, DPB3 and DPB4.

The protein localises to the nucleus. In terms of biological role, as accessory component of the DNA polymerase epsilon (DNA polymerase II) participates in chromosomal DNA replication. This chain is DNA polymerase epsilon subunit B (DPB2), found in Debaryomyces hansenii (strain ATCC 36239 / CBS 767 / BCRC 21394 / JCM 1990 / NBRC 0083 / IGC 2968) (Yeast).